We begin with the raw amino-acid sequence, 812 residues long: Phosphoenolpyruvate synthase (812 aa).

The active-site Tele-phosphohistidine intermediate is His430. Substrate is bound by residues Arg520, Arg588, Glu690, Gly711, Ser712, Asn713, and Asp714. A Mg(2+)-binding site is contributed by Glu690. Asp714 is a Mg(2+) binding site. Cys761 acts as the Proton donor in catalysis.

The protein belongs to the PEP-utilizing enzyme family. Mg(2+) is required as a cofactor.

It catalyses the reaction pyruvate + ATP + H2O = phosphoenolpyruvate + AMP + phosphate + 2 H(+). The protein operates within carbohydrate biosynthesis; gluconeogenesis. Functionally, catalyzes the phosphorylation of pyruvate to phosphoenolpyruvate. The chain is Phosphoenolpyruvate synthase (ppsA) from Helicobacter pylori (strain ATCC 700392 / 26695) (Campylobacter pylori).